The chain runs to 401 residues: Deacetoxyvindoline 4-hydroxylase (401 aa).

Residues 242 to 345 (CAEGLILLGH…SVAVAFGIKT (104 aa)) form the Fe2OG dioxygenase domain. Positions 268, 270, and 324 each coordinate Fe cation. Position 334 (arginine 334) interacts with 2-oxoglutarate.

Belongs to the iron/ascorbate-dependent oxidoreductase family. As to quaternary structure, monomer. It depends on Fe cation as a cofactor. Requires L-ascorbate as cofactor. As to expression, highest levels in leaves, lower levels in stems and fruits. Not expressed in flowers and roots.

It is found in the cytoplasm. It localises to the nucleus. The catalysed reaction is deacetoxyvindoline + 2-oxoglutarate + O2 = 4-O-deacetylvindoline + succinate + CO2. The protein operates within alkaloid biosynthesis; vindoline biosynthesis. Its function is as follows. Catalyzes the C4-hydroxylation of desacetoxyvindoline. This chain is Deacetoxyvindoline 4-hydroxylase, found in Catharanthus roseus (Madagascar periwinkle).